A 1243-amino-acid chain; its full sequence is MIMFLPVGRMSLGILILFLTGGNLVSASEERQEPMHAVSVLSPEKSTDLSLPTRKRQLLDATETGRRWLLRRRRSILFPNGVKICSSETVAEAVANHVKYFKARVCQEAIWEAFRTFWDRLPGRDEYRHWMNLCEDGVTSVFEMGAHFSQSVEHRNLIMKKLAYTREAESSSCKDQSCGPELSFPVPIGETSTLTGAVSSASYPGLASESSAASPQESISNEIENVTEEPTQPAAEQIAEFSIQLLGKRYSEELRDPSSALYRLLVEEFISEVEKAFTGLPGYKGIRVLEFRAPEENDSGIDVHYAVTFNGEAISNTTWDLISLHSNKVENHGLVEMDDKPTAVYTISNFRDYIAETLHQNFLMGNSSLNPDPKSLQLINVRGVLLPQTEDIVWNTQSSSLQVTTSSILDNTLQAEWLSADTTTTTTTTISPFGFSSSSPSATGRELQSQSALRDVVSTSKLASPTKVVLSSLPEILGGSSLTLHSVTPAVLQPDLPVAPEGRTSGSFILEDGLASTEELEDTSIDGLPSSPLIQPVPKETVPPMEDSDTALLSTPHLTSSAIEDLTKDIGTPSGLESLASNISDQLEVIPWFPDTSVEKDFIFESGLGSGSGKDVDVIDWPWSETSLEKTTKPLSKSWSEEQDALLPTEGREKLHIDGRVDSTEQIIESSEHRYGDRPIHFIEEESHVRSTIPIFVESATPPTSPIFSKHTSDVPDIDSYSLTKPPFLPVTIAIPASTKKTDEVLKEDMVHTESSSHKELDSEVPVSRPDMQPVWTMLPESDTVWTRTSSLGKLSRDTLASTPESTDRLWLKASMTQSTELPSTTHSTQLEEEVIMAVQDISLELDQVGTDYYQSELTEEQHGKADSYVEMSTSVHYTEMPIVALPTKGGVLSHTQTAGALVVFFSLRVTNMLFSEDLFNKNSLEYKALEQRFLELLVPYLQSNLSGFQNLEILSFRNGSIVVNSRVRFAESAPPNVNKAMYRILEDFCTTAYQTMNLDIDKYSLDVESGDEANPCKFQACNEFSECLVNPWSGEAKCKCYPGYLSVDELPCQSLCDLQPDFCLNDGKCDIMPGHGAICRCRVGSNWWYRGQHCEEFVSEPFVIGITIASVVSFLLVASAVVFFLVKMLQAQNVRRERQRPTSSSRHPDSLSSVENAMKYNPAYESHLAGCELYEKSYSQHPFYSSASEEVIGGLSREEIRQMYESSDLSKEEIQERMRILELYANDPEFAAFVREHQMEEL.

Residues 1-27 (MIMFLPVGRMSLGILILFLTGGNLVSA) form the signal peptide. The Extracellular segment spans residues 28-1106 (SEERQEPMHA…EFVSEPFVIG (1079 aa)). The disordered stretch occupies residues 205–234 (GLASESSAASPQESISNEIENVTEEPTQPA). Residues 207–220 (ASESSAASPQESIS) are compositionally biased toward low complexity. The span at 221 to 230 (NEIENVTEEP) shows a compositional bias: polar residues. An N-linked (GlcNAc...) asparagine glycan is attached at N225. The 115-residue stretch at 235–349 (AEQIAEFSIQ…KPTAVYTISN (115 aa)) folds into the SEA 1 domain. The tract at residues 255–263 (RDPSSALYR) is hyaluronan-binding motif involved in chondroitin sulfate A-binding. Residues N297, N316, and N366 are each glycosylated (N-linked (GlcNAc...) asparagine). Residues T427, T428, and T429 are each glycosylated (O-linked (GalNAc...) threonine). N-linked (GlcNAc...) asparagine glycosylation is present at N582. T701, T704, and T712 each carry an O-linked (GalNAc...) threonine glycan. Over residues 748-762 (EDMVHTESSSHKELD) the composition is skewed to basic and acidic residues. Residues 748-768 (EDMVHTESSSHKELDSEVPVS) form a disordered region. O-linked (GalNAc...) threonine glycosylation is found at T817 and T888. Residues 900 to 1013 (GALVVFFSLR…YSLDVESGDE (114 aa)) form the SEA 2 domain. Residues N945 and N959 are each glycosylated (N-linked (GlcNAc...) asparagine). EGF-like domains lie at 1013-1054 (EANP…LPCQ) and 1055-1096 (SLCD…QHCE). 6 disulfide bridges follow: C1017–C1028, C1022–C1039, C1041–C1053, C1057–C1070, C1064–C1080, and C1082–C1095. The hyaluronan-binding motif involved in chondroitin sulfate C-binding stretch occupies residues 1083–1091 (RVGSNWWYR). Residues 1107-1127 (ITIASVVSFLLVASAVVFFLV) traverse the membrane as a helical segment. A hyaluronan-binding motif involved in chondroitin sulfate A- and C-binding region spans residues 1128-1136 (KMLQAQNVR). Topologically, residues 1128-1243 (KMLQAQNVRR…FVREHQMEEL (116 aa)) are cytoplasmic. Residues 1139-1147 (RQRPTSSSR) form a hyaluronan-binding motif involved in chondroitin sulfate C-binding region. Positions 1212–1220 (KEEIQERMR) are hyaluronan-binding motif involved in chondroitin sulfate A- and C-binding motif.

Expressed in the retina (at protein level). Expressed in the pineal gland.

The protein localises to the photoreceptor outer segment membrane. The protein resides in the photoreceptor inner segment membrane. Its subcellular location is the secreted. It is found in the extracellular space. It localises to the extracellular matrix. The protein localises to the interphotoreceptor matrix. Its function is as follows. Chondroitin sulfate- and hyaluronan-binding proteoglycan involved in the organization of interphotoreceptor matrix; may participate in the maturation and maintenance of the light-sensitive photoreceptor outer segment. Binds heparin. In Mus musculus (Mouse), this protein is Interphotoreceptor matrix proteoglycan 2 (Impg2).